Consider the following 402-residue polypeptide: La-related protein 7 homolog (402 aa).

The segment at 64-138 (EPLNPDFLSA…FDNSSHMVIR (75 aa)) is HTH La-type RNA-binding-like region. The interval 148–230 (IPLYDRIIYV…LTRKEWTNRE (83 aa)) is RRM-like region. Residues 288-400 (DFTKNLLTRI…EEEKNYWRML (113 aa)) are xRRM-like region. A xRRM domain is found at 288–402 (DFTKNLLTRI…EKNYWRMLKK (115 aa)).

This sequence belongs to the LARP7 family. As to quaternary structure, component of the telomerase holoenzyme complex composed minimally of trt1 and the telomerase RNA template component. Interacts with skp1.

It localises to the chromosome. The protein localises to the telomere. Its subcellular location is the nucleus. It is found in the cytoplasm. In terms of biological role, RNA-binding protein required for assembly of the holoenzyme telomerase ribonucleoprotein (RNP) complex. Specifically binds telomerase RNA ter1 and promotes assembly of ter1 with catalytic subunit trt1. Telomerase is a ribonucleoprotein enzyme essential that copies new telomeric repeats onto chromosome ends and functions to maintain cell division. In Schizosaccharomyces pombe (strain 972 / ATCC 24843) (Fission yeast), this protein is La-related protein 7 homolog.